Here is a 497-residue protein sequence, read N- to C-terminus: Acetyl-coenzyme A carboxylase carboxyl transferase subunit beta, chloroplastic (497 aa).

The 268-residue stretch at 230–497 (LWVQCENCYG…FFPVNSNSIK (268 aa)) folds into the CoA carboxyltransferase N-terminal domain. Zn(2+)-binding residues include Cys234, Cys237, Cys253, and Cys256. Residues 234–256 (CENCYGLNYKKFFRSKFNICEQC) form a C4-type zinc finger.

Belongs to the AccD/PCCB family. As to quaternary structure, acetyl-CoA carboxylase is a heterohexamer composed of biotin carboxyl carrier protein, biotin carboxylase and 2 subunits each of ACCase subunit alpha and ACCase plastid-coded subunit beta (accD). Requires Zn(2+) as cofactor.

The protein resides in the plastid. The protein localises to the chloroplast stroma. The enzyme catalyses N(6)-carboxybiotinyl-L-lysyl-[protein] + acetyl-CoA = N(6)-biotinyl-L-lysyl-[protein] + malonyl-CoA. It functions in the pathway lipid metabolism; malonyl-CoA biosynthesis; malonyl-CoA from acetyl-CoA: step 1/1. Its function is as follows. Component of the acetyl coenzyme A carboxylase (ACC) complex. Biotin carboxylase (BC) catalyzes the carboxylation of biotin on its carrier protein (BCCP) and then the CO(2) group is transferred by the transcarboxylase to acetyl-CoA to form malonyl-CoA. In Nandina domestica (Heavenly bamboo), this protein is Acetyl-coenzyme A carboxylase carboxyl transferase subunit beta, chloroplastic.